The sequence spans 250 residues: 3-deoxy-manno-octulosonate cytidylyltransferase 1 (250 aa).

This sequence belongs to the KdsB family.

Its subcellular location is the cytoplasm. The enzyme catalyses 3-deoxy-alpha-D-manno-oct-2-ulosonate + CTP = CMP-3-deoxy-beta-D-manno-octulosonate + diphosphate. It participates in nucleotide-sugar biosynthesis; CMP-3-deoxy-D-manno-octulosonate biosynthesis; CMP-3-deoxy-D-manno-octulosonate from 3-deoxy-D-manno-octulosonate and CTP: step 1/1. Its pathway is bacterial outer membrane biogenesis; lipopolysaccharide biosynthesis. Functionally, activates KDO (a required 8-carbon sugar) for incorporation into bacterial lipopolysaccharide in Gram-negative bacteria. The protein is 3-deoxy-manno-octulosonate cytidylyltransferase 1 of Actinobacillus pleuropneumoniae serotype 5b (strain L20).